A 494-amino-acid chain; its full sequence is Glutamate--tRNA ligase (494 aa).

The short motif at 10–20 (PSPTGDPHVGT) is the 'HIGH' region element. Residues C107, C109, C134, and H136 each coordinate Zn(2+). A 'KMSKS' region motif is present at residues 251–255 (KLSKR). ATP is bound at residue K254.

This sequence belongs to the class-I aminoacyl-tRNA synthetase family. Glutamate--tRNA ligase type 1 subfamily. In terms of assembly, monomer. Requires Zn(2+) as cofactor.

Its subcellular location is the cytoplasm. It carries out the reaction tRNA(Glu) + L-glutamate + ATP = L-glutamyl-tRNA(Glu) + AMP + diphosphate. Its function is as follows. Catalyzes the attachment of glutamate to tRNA(Glu) in a two-step reaction: glutamate is first activated by ATP to form Glu-AMP and then transferred to the acceptor end of tRNA(Glu). In Pseudomonas aeruginosa (strain ATCC 15692 / DSM 22644 / CIP 104116 / JCM 14847 / LMG 12228 / 1C / PRS 101 / PAO1), this protein is Glutamate--tRNA ligase.